The primary structure comprises 334 residues: Phosphoribosylformylglycinamidine cyclo-ligase (334 aa).

The protein belongs to the AIR synthase family.

It localises to the cytoplasm. The enzyme catalyses 2-formamido-N(1)-(5-O-phospho-beta-D-ribosyl)acetamidine + ATP = 5-amino-1-(5-phospho-beta-D-ribosyl)imidazole + ADP + phosphate + H(+). Its pathway is purine metabolism; IMP biosynthesis via de novo pathway; 5-amino-1-(5-phospho-D-ribosyl)imidazole from N(2)-formyl-N(1)-(5-phospho-D-ribosyl)glycinamide: step 2/2. The sequence is that of Phosphoribosylformylglycinamidine cyclo-ligase from Thermococcus gammatolerans (strain DSM 15229 / JCM 11827 / EJ3).